Here is a 121-residue protein sequence, read N- to C-terminus: Large ribosomal subunit protein uL14 (121 aa).

Belongs to the universal ribosomal protein uL14 family. Part of the 50S ribosomal subunit. Forms a cluster with proteins L3 and L19. In the 70S ribosome, L14 and L19 interact and together make contacts with the 16S rRNA in bridges B5 and B8.

Its function is as follows. Binds to 23S rRNA. Forms part of two intersubunit bridges in the 70S ribosome. The protein is Large ribosomal subunit protein uL14 of Opitutus terrae (strain DSM 11246 / JCM 15787 / PB90-1).